A 154-amino-acid polypeptide reads, in one-letter code: Myoglobin (154 aa).

Residues 2–148 (GLSDGEWQLV…FRKDIAAKYK (147 aa)) enclose the Globin domain. Serine 4 is modified (phosphoserine). Histidine 65 lines the nitrite pocket. Histidine 65 lines the O2 pocket. Threonine 68 carries the post-translational modification Phosphothreonine. Histidine 94 serves as a coordination point for heme b.

Belongs to the globin family. Monomeric.

The protein resides in the cytoplasm. The protein localises to the sarcoplasm. It catalyses the reaction Fe(III)-heme b-[protein] + nitric oxide + H2O = Fe(II)-heme b-[protein] + nitrite + 2 H(+). The catalysed reaction is H2O2 + AH2 = A + 2 H2O. Monomeric heme protein which primary function is to store oxygen and facilitate its diffusion within muscle tissues. Reversibly binds oxygen through a pentacoordinated heme iron and enables its timely and efficient release as needed during periods of heightened demand. Depending on the oxidative conditions of tissues and cells, and in addition to its ability to bind oxygen, it also has a nitrite reductase activity whereby it regulates the production of bioactive nitric oxide. Under stress conditions, like hypoxia and anoxia, it also protects cells against reactive oxygen species thanks to its pseudoperoxidase activity. This is Myoglobin (MB) from Peponocephala electra (Melon-headed whale).